The primary structure comprises 185 residues: Threonylcarbamoyl-AMP synthase (185 aa).

Positions 4–185 (SWRVQQAARE…LATGNIVRPA (182 aa)) constitute a YrdC-like domain.

Belongs to the SUA5 family. TsaC subfamily.

The protein localises to the cytoplasm. The enzyme catalyses L-threonine + hydrogencarbonate + ATP = L-threonylcarbamoyladenylate + diphosphate + H2O. Its function is as follows. Required for the formation of a threonylcarbamoyl group on adenosine at position 37 (t(6)A37) in tRNAs that read codons beginning with adenine. Catalyzes the conversion of L-threonine, HCO(3)(-)/CO(2) and ATP to give threonylcarbamoyl-AMP (TC-AMP) as the acyladenylate intermediate, with the release of diphosphate. The polypeptide is Threonylcarbamoyl-AMP synthase (Pseudomonas fluorescens (strain Pf0-1)).